The primary structure comprises 48 residues: Large ribosomal subunit protein bL36c (48 aa).

Belongs to the bacterial ribosomal protein bL36 family.

Its subcellular location is the plastid. The protein resides in the chloroplast. The chain is Large ribosomal subunit protein bL36c from Rhodomonas salina (Cryptomonas salina).